The chain runs to 102 residues: Small ribosomal subunit protein uS10 (102 aa).

This sequence belongs to the universal ribosomal protein uS10 family. In terms of assembly, part of the 30S ribosomal subunit.

In terms of biological role, involved in the binding of tRNA to the ribosomes. This is Small ribosomal subunit protein uS10 from Thermococcus gammatolerans (strain DSM 15229 / JCM 11827 / EJ3).